A 230-amino-acid polypeptide reads, in one-letter code: ATP phosphoribosyltransferase (230 aa).

It belongs to the ATP phosphoribosyltransferase family. Short subfamily. Heteromultimer composed of HisG and HisZ subunits.

The protein resides in the cytoplasm. The catalysed reaction is 1-(5-phospho-beta-D-ribosyl)-ATP + diphosphate = 5-phospho-alpha-D-ribose 1-diphosphate + ATP. Its pathway is amino-acid biosynthesis; L-histidine biosynthesis; L-histidine from 5-phospho-alpha-D-ribose 1-diphosphate: step 1/9. Catalyzes the condensation of ATP and 5-phosphoribose 1-diphosphate to form N'-(5'-phosphoribosyl)-ATP (PR-ATP). Has a crucial role in the pathway because the rate of histidine biosynthesis seems to be controlled primarily by regulation of HisG enzymatic activity. This is ATP phosphoribosyltransferase (hisG) from Chelativorans sp. (strain BNC1).